Consider the following 210-residue polypeptide: Large ribosomal subunit protein uL4 (210 aa).

Part of the 50S ribosomal subunit. In terms of processing, the N-terminus is blocked.

Functionally, one of the primary rRNA binding proteins, this protein initially binds near the 5'-end of the 23S rRNA. It is important during the early stages of 50S assembly. It makes multiple contacts with different domains of the 23S rRNA in the assembled 50S subunit and ribosome. Forms part of the polypeptide exit tunnel. In terms of biological role, this protein can be incorporated into E.coli ribosomes in vivo, which resulted in decreased peptidyltransferase (Ptase) activity of the hybrid ribosomes. The hybrid 50S subunits associate less well with 30S subunits to form the ribosome. This is Large ribosomal subunit protein uL4 (rplD) from Thermus thermophilus (strain ATCC 27634 / DSM 579 / HB8).